Here is a 202-residue protein sequence, read N- to C-terminus: Cytochrome c oxidase assembly protein CtaG (202 aa).

Residues 1-14 are Cytoplasmic-facing; the sequence is MSENAGTPKKQGRN. The chain crosses the membrane as a helical; Signal-anchor for type II membrane protein span at residues 15–37; it reads NGAVVMMCLSFVFGMGAMSYAAV. Residues 38–202 lie on the Periplasmic side of the membrane; sequence PLYRIFCQVT…GGAEKIEKKL (165 aa).

Belongs to the COX11/CtaG family.

It is found in the cell inner membrane. Exerts its effect at some terminal stage of cytochrome c oxidase synthesis, probably by being involved in the insertion of the copper B into subunit I. This is Cytochrome c oxidase assembly protein CtaG from Rhizobium johnstonii (strain DSM 114642 / LMG 32736 / 3841) (Rhizobium leguminosarum bv. viciae).